Reading from the N-terminus, the 385-residue chain is Chaperone protein DnaJ (385 aa).

In terms of domain architecture, J spans 5 to 70 (DYYEVLGVAK…QKRAAYDRFG (66 aa)). The CR-type zinc finger occupies 141 to 219 (GKTETIRIPT…CSGAGRVNRE (79 aa)). Residues cysteine 154, cysteine 157, cysteine 171, cysteine 174, cysteine 193, cysteine 196, cysteine 207, and cysteine 210 each coordinate Zn(2+). CXXCXGXG motif repeat units follow at residues 154-161 (CETCSGTG), 171-178 (CSTCGGYG), 193-200 (CPNCHGRG), and 207-214 (CTACSGAG).

It belongs to the DnaJ family. As to quaternary structure, homodimer. It depends on Zn(2+) as a cofactor.

Its subcellular location is the cytoplasm. Functionally, participates actively in the response to hyperosmotic and heat shock by preventing the aggregation of stress-denatured proteins and by disaggregating proteins, also in an autonomous, DnaK-independent fashion. Unfolded proteins bind initially to DnaJ; upon interaction with the DnaJ-bound protein, DnaK hydrolyzes its bound ATP, resulting in the formation of a stable complex. GrpE releases ADP from DnaK; ATP binding to DnaK triggers the release of the substrate protein, thus completing the reaction cycle. Several rounds of ATP-dependent interactions between DnaJ, DnaK and GrpE are required for fully efficient folding. Also involved, together with DnaK and GrpE, in the DNA replication of plasmids through activation of initiation proteins. This chain is Chaperone protein DnaJ, found in Methylorubrum extorquens (strain PA1) (Methylobacterium extorquens).